The sequence spans 308 residues: Dual oxidase maturation factor 1 (308 aa).

Residues 1–21 are Extracellular-facing; it reads MQANIFPFYPQPRTSFKFDTK. Residues 22-42 traverse the membrane as a helical segment; it reads IIEIIIICIVTACTFIIILPG. The Cytoplasmic portion of the chain corresponds to 43–49; that stretch reads IRGKSRS. Residues 50-70 traverse the membrane as a helical segment; the sequence is IWLFRILTSLFIGAVILAVNF. The Extracellular segment spans residues 71-172; sequence TSDWETGIVT…SPCGLFQQYC (102 aa). 3 N-linked (GlcNAc...) asparagine glycosylation sites follow: Asn-94, Asn-107, and Asn-119. A helical membrane pass occupies residues 173–195; that stretch reads ISTYYSSEIMWVAFGSWILYNVL. The Cytoplasmic segment spans residues 196-199; it reads FSMP. Residues 200-220 form a helical membrane-spanning segment; the sequence is VILYGICMMFVTAICMLVSLI. The Extracellular segment spans residues 221–247; it reads SFASVRQAPVCNIHFGNAVLKTHFGVS. A helical transmembrane segment spans residues 248–268; the sequence is YWLSLVTGLFCLIVSLVLLFL. Residues 269–308 lie on the Cytoplasmic side of the membrane; sequence YKTQPKVIRLIFSYGEEEDLSDKSENEEEHSSALSLNEML.

It belongs to the DUOXA family.

Its subcellular location is the membrane. Functionally, possible role in maturation and transport from the endoplasmic reticulum to the plasma membrane of functional dual oxidase. In Xenopus tropicalis (Western clawed frog), this protein is Dual oxidase maturation factor 1 (duoxa1).